The chain runs to 112 residues: Cytochrome c2 (112 aa).

Heme c contacts are provided by C14, C17, H18, and M91.

The protein belongs to the cytochrome c family. Post-translationally, binds 1 heme c group covalently per subunit.

Functionally, cytochrome c2 is found mainly in purple, non-sulfur, photosynthetic bacteria where it functions as the electron donor to the oxidized bacteriochlorophyll in the photophosphorylation pathway. However, it may also have a role in the respiratory chain and is found in some non-photosynthetic bacteria. The polypeptide is Cytochrome c2 (cycA) (Rhodospirillum rubrum).